Consider the following 158-residue polypeptide: NADH-quinone oxidoreductase subunit B (158 aa).

[4Fe-4S] cluster contacts are provided by Cys-37, Cys-38, Cys-102, and Cys-132.

Belongs to the complex I 20 kDa subunit family. NDH-1 is composed of 14 different subunits. Subunits NuoB, C, D, E, F, and G constitute the peripheral sector of the complex. It depends on [4Fe-4S] cluster as a cofactor.

It is found in the cell inner membrane. It catalyses the reaction a quinone + NADH + 5 H(+)(in) = a quinol + NAD(+) + 4 H(+)(out). In terms of biological role, NDH-1 shuttles electrons from NADH, via FMN and iron-sulfur (Fe-S) centers, to quinones in the respiratory chain. Couples the redox reaction to proton translocation (for every two electrons transferred, four hydrogen ions are translocated across the cytoplasmic membrane), and thus conserves the redox energy in a proton gradient. In Hydrogenovibrio crunogenus (strain DSM 25203 / XCL-2) (Thiomicrospira crunogena), this protein is NADH-quinone oxidoreductase subunit B.